Reading from the N-terminus, the 443-residue chain is Probable nitrate/nitrite antiporter NarK2 (443 aa).

Helical transmembrane passes span 32-52, 66-86, 95-115, 123-143, 172-192, 210-230, 256-276, 292-312, 314-334, 346-366, 383-403, and 409-429; these read ITTFNLTLSFITWYVVSALVV, LFWLTAMPGLAGGTLRIIWTF, HLVTFSTLLLLIPLLGWGFAV, WVLLLLAFLAGIGGGHFSGYM, IVQFVTPWIIGFALFGSLLGG, NATFAWVPFVLLGALLAWVYL, SLYIMTFGSFSGFSAIFPLLI, YAFLGPLVGSLARVIAGPISD, LGGAIVTQVSAIGIFLSALLV, FPMFVVAMLLIFFFSGVGNAS, VIGWTAAVAAYGPFLFSTLAA, and TGGFTAFFYGLMVFYAFNFFL.

Belongs to the major facilitator superfamily. Nitrate/nitrite porter (TC 2.A.1.8) family.

Its subcellular location is the cell membrane. It catalyses the reaction nitrate(in) + nitrite(out) = nitrate(out) + nitrite(in). In terms of biological role, probable nitrate/nitrite antiporter that may be involved in nitrate import and nitrite export during anaerobic growth. The polypeptide is Probable nitrate/nitrite antiporter NarK2 (Thermus thermophilus).